We begin with the raw amino-acid sequence, 706 residues long: ATP-dependent zinc metalloprotease FtsH (706 aa).

Polar residues predominate over residues Met-1–Glu-17. The disordered stretch occupies residues Met-1 to Gln-20. Residues Met-1–Lys-24 are Cytoplasmic-facing. Residues Leu-25–Phe-45 form a helical membrane-spanning segment. Residues Trp-46–Trp-142 are Periplasmic-facing. Residues Gly-88–Asn-111 are disordered. Over residues Lys-91 to Arg-100 the composition is skewed to basic and acidic residues. A helical transmembrane segment spans residues Ile-143–Ile-163. At Phe-164–Asn-706 the chain is on the cytoplasmic side. Gly-239–Thr-246 contributes to the ATP binding site. His-462 contacts Zn(2+). Glu-463 is an active-site residue. Zn(2+) is bound by residues His-466 and Asp-539. Residues Arg-641–Gly-681 are disordered.

The protein in the central section; belongs to the AAA ATPase family. It in the C-terminal section; belongs to the peptidase M41 family. In terms of assembly, homohexamer. Zn(2+) is required as a cofactor.

Its subcellular location is the cell inner membrane. Functionally, acts as a processive, ATP-dependent zinc metallopeptidase for both cytoplasmic and membrane proteins. Plays a role in the quality control of integral membrane proteins. This is ATP-dependent zinc metalloprotease FtsH from Chlorobium luteolum (strain DSM 273 / BCRC 81028 / 2530) (Pelodictyon luteolum).